A 225-amino-acid polypeptide reads, in one-letter code: Esterase OVCA2 (225 aa).

Catalysis depends on charge relay system residues Ser-119, Asp-177, and His-204.

It belongs to the LovG family. In terms of tissue distribution, strongly expressed in kidney and liver. Moderately expressed in brain, skin and testis. Weakly expressed in heart, lung, small intestine, spleen, stomach and thymus.

The enzyme catalyses a carboxylic ester + H2O = an alcohol + a carboxylate + H(+). Functionally, exhibits ester hydrolase activity with a strong preference for long-chain alkyl ester substrates and high selectivity against a variety of short, branched, and substituted esters. Is able to hydrolyze ester bonds within a wide range of p-nitrophenyl derivatives (C2-C14) in vitro, with a strong preference toward substrates of &gt;8 carbons. This Mus musculus (Mouse) protein is Esterase OVCA2 (Ovca2).